A 243-amino-acid polypeptide reads, in one-letter code: UPF0246 protein SAG2081 (243 aa).

The protein belongs to the UPF0246 family.

The protein is UPF0246 protein SAG2081 of Streptococcus agalactiae serotype V (strain ATCC BAA-611 / 2603 V/R).